A 324-amino-acid chain; its full sequence is E3 ubiquitin-protein ligase SIAH2 (324 aa).

Polar residues predominate over residues 1–15; sequence MSRPSSTGPSANKPC. Residues 1 to 42 form a disordered region; it reads MSRPSSTGPSANKPCSKQPPPQPQHTPSPAAPPAAATISAAG. The residue at position 6 (serine 6) is a Phosphoserine. Phosphoserine; by DYRK2 is present on serine 16. Positions 17–32 are enriched in pro residues; sequence KQPPPQPQHTPSPAAP. Threonine 26 carries the phosphothreonine; by DYRK2 modification. Phosphoserine; by DYRK2 and MAPK14 is present on serine 28. The span at 33–42 shows a compositional bias: low complexity; the sequence is PAAATISAAG. Phosphoserine; by DYRK2 is present on serine 68. Residues 80-115 form an RING-type zinc finger; the sequence is CPVCFDYVLPPILQCQAGHLVCNQCRQKLSCCPTCR. Threonine 119 carries the post-translational modification Phosphothreonine; by DYRK2. The SBD stretch occupies residues 130 to 322; the sequence is VASAVLFPCK…LGINVTISTC (193 aa). The SIAH-type zinc-finger motif lies at 133–193; it reads AVLFPCKYAT…VMSHLMHAHK (61 aa). Positions 138, 145, 157, 161, 168, 175, 187, and 192 each coordinate Zn(2+).

This sequence belongs to the SINA (Seven in absentia) family. In terms of assembly, homodimer. Interacts with UBE2E2. Interacts with PEG3. Interacts with VAV1, without mediating its ubiquitin-mediated degradation. Interacts with CACYBP/SIP. Probable component of some large E3 complex possibly composed of UBE2D1, SIAH2, CACYBP/SIP, SKP1, APC and TBL1X. Interacts with PEG10, which may inhibit its activity. Interacts with EGLN2 and SNCAIP. Interacts with DYRK2. Interacts with NR1D1 and NR1D2. Interacts with DCC. Interacts with AXIN1. Phosphorylated at Ser-28 by MAPK14, which mediates the degradation by the proteasome of EGLN3. Phosphorylated at Ser-28 by DYRK2; this increases the ubiquitin ligase activity and promotes degradation of EGLN3. As to expression, widely expressed at low level.

The protein localises to the cytoplasm. It localises to the nucleus. It carries out the reaction S-ubiquitinyl-[E2 ubiquitin-conjugating enzyme]-L-cysteine + [acceptor protein]-L-lysine = [E2 ubiquitin-conjugating enzyme]-L-cysteine + N(6)-ubiquitinyl-[acceptor protein]-L-lysine.. The protein operates within protein modification; protein ubiquitination. Its activity is regulated as follows. Inhibited by interaction with SNCAIP (isoform 2, but not isoform 1). May be inhibited by interaction with PEG10. E3 ubiquitin-protein ligase that mediates ubiquitination and subsequent proteasomal degradation of target proteins. E3 ubiquitin ligases accept ubiquitin from an E2 ubiquitin-conjugating enzyme in the form of a thioester and then directly transfers the ubiquitin to targeted substrates. Mediates E3 ubiquitin ligase activity either through direct binding to substrates or by functioning as the essential RING domain subunit of larger E3 complexes. Triggers the ubiquitin-mediated degradation of many substrates, including proteins involved in transcription regulation (GPS2, POU2AF1, PML, NCOR1), a cell surface receptor (DCC), an antiapoptotic protein (BAG1), and a protein involved in synaptic vesicle function in neurons (SYP). Mediates ubiquitination and proteasomal degradation of DYRK2 in response to hypoxia. It is thereby involved in apoptosis, tumor suppression, cell cycle, transcription and signaling processes. Has some overlapping function with SIAH1. Triggers the ubiquitin-mediated degradation of TRAF2, whereas SIAH1 does not. Promotes monoubiquitination of SNCA. Regulates cellular clock function via ubiquitination of the circadian transcriptional repressors NR1D1 and NR1D2 leading to their proteasomal degradation. Plays an important role in mediating the rhythmic degradation/clearance of NR1D1 and NR1D2 contributing to their circadian profile of protein abundance. Mediates ubiquitination and degradation of EGLN2 and EGLN3 in response to the unfolded protein response (UPR), leading to their degradation and subsequent stabilization of ATF4. Also part of the Wnt signaling pathway in which it mediates the Wnt-induced ubiquitin-mediated proteasomal degradation of AXIN1. The protein is E3 ubiquitin-protein ligase SIAH2 (SIAH2) of Homo sapiens (Human).